Reading from the N-terminus, the 273-residue chain is Dermonecrotic toxin LruSicTox-alphaIC1b (273 aa).

Residue H5 is part of the active site. Residues E25 and D27 each contribute to the Mg(2+) site. H41 acts as the Nucleophile in catalysis. Disulfide bonds link C45–C51 and C47–C190. A Mg(2+)-binding site is contributed by D85.

It belongs to the arthropod phospholipase D family. Class II subfamily. It depends on Mg(2+) as a cofactor. Expressed by the venom gland.

The protein resides in the secreted. It catalyses the reaction an N-(acyl)-sphingosylphosphocholine = an N-(acyl)-sphingosyl-1,3-cyclic phosphate + choline. It carries out the reaction an N-(acyl)-sphingosylphosphoethanolamine = an N-(acyl)-sphingosyl-1,3-cyclic phosphate + ethanolamine. The catalysed reaction is a 1-acyl-sn-glycero-3-phosphocholine = a 1-acyl-sn-glycero-2,3-cyclic phosphate + choline. The enzyme catalyses a 1-acyl-sn-glycero-3-phosphoethanolamine = a 1-acyl-sn-glycero-2,3-cyclic phosphate + ethanolamine. Functionally, dermonecrotic toxins cleave the phosphodiester linkage between the phosphate and headgroup of certain phospholipids (sphingolipid and lysolipid substrates), forming an alcohol (often choline) and a cyclic phosphate. This toxin acts on sphingomyelin (SM). It may also act on ceramide phosphoethanolamine (CPE), lysophosphatidylcholine (LPC) and lysophosphatidylethanolamine (LPE), but not on lysophosphatidylserine (LPS), and lysophosphatidylglycerol (LPG). It acts by transphosphatidylation, releasing exclusively cyclic phosphate products as second products. Induces dermonecrosis, hemolysis, increased vascular permeability, edema, inflammatory response, and platelet aggregation. This chain is Dermonecrotic toxin LruSicTox-alphaIC1b, found in Loxosceles rufescens (Mediterranean recluse spider).